Reading from the N-terminus, the 185-residue chain is Lectin B4 (185 aa).

Residue Asn-48 is glycosylated (N-linked (GlcNAc...) asparagine). Mn(2+) contacts are provided by Glu-111 and Asp-113. Residues Asp-113, Tyr-115, Asn-117, and Asp-120 each contribute to the Ca(2+) site. Mn(2+) is bound at residue Asp-120. Asn-122 carries an N-linked (GlcNAc...) asparagine glycan. His-125 contacts Mn(2+).

This sequence belongs to the leguminous lectin family. Homo- or heterotetramer. V.villosa isolectins are composed of either two subunits a and two subunits B (A2B2), four subunits A (A4), or four subunits B (B4). The predominant form, isolectin B4, has no A1 erythrocyte agglutinating activity.

Its function is as follows. N-acetyl-D-galactosamine specific lectin. Binds the Tn determinant (GalNAc-alpha-O-Ser/Thr) of the tumor-associated glycopeptide. Could be required for agglutinating cells such as Tn-exposed erythrocytes. In Vicia villosa (Hairy vetch), this protein is Lectin B4.